A 500-amino-acid chain; its full sequence is Tektin-like protein 1 (500 aa).

Positions 1-25 (MPVLLPSTDRDQDSRVGAPEWHQAA) are disordered. Residue serine 14 is modified to Phosphoserine. Residues 198-229 (MLVWEREELKSMKRKMEKDMERSEALLKALAS) are a coiled coil. The segment at 265 to 286 (VDITRPPTPRTQGLKTPPPDPV) is disordered. Tyrosine 372 bears the Phosphotyrosine mark. The stretch at 422–448 (LTRHNLQMEKNLKELRTTHDNLAWSLN) forms a coiled coil.

As to quaternary structure, microtubule inner protein component of sperm flagellar doublet microtubules.

It is found in the cytoplasm. The protein localises to the cytoskeleton. Its subcellular location is the flagellum axoneme. Microtubule inner protein (MIP) part of the dynein-decorated doublet microtubules (DMTs) in sperm flagellar axoneme, which is required for motile flagellum beating. Forms an extensive interaction network cross-linking the lumen of axonemal doublet microtubules. This is Tektin-like protein 1 from Rattus norvegicus (Rat).